Consider the following 160-residue polypeptide: Inorganic pyrophosphatase (160 aa).

3 residues coordinate substrate: Lys16, Arg28, and Tyr40. Mg(2+) contacts are provided by Asp50, Asp55, and Asp87. Tyr126 serves as a coordination point for substrate.

The protein belongs to the PPase family. Homohexamer. It depends on Mg(2+) as a cofactor.

The protein localises to the cytoplasm. The enzyme catalyses diphosphate + H2O = 2 phosphate + H(+). In terms of biological role, catalyzes the hydrolysis of inorganic pyrophosphate (PPi) forming two phosphate ions. This chain is Inorganic pyrophosphatase, found in Nanoarchaeum equitans (strain Kin4-M).